The following is a 526-amino-acid chain: Na(+)/H(+) antiporter NhaB (526 aa).

The next 10 helical transmembrane spans lie at 13-33, 98-118, 133-155, 208-228, 244-264, 309-329, 355-375, 395-415, 452-472, and 481-501; these read FLGQSPDWYKLAILVFLVVNP, LLLIFMVAGIYFMKQLLLFVF, LAFCFAAALLSAFLDALTVVAVV, LLMHAGVGTALGGVMTMVGEP, FFLRMAPVTLPVFACGLLVCL, ALIGIWLVVALAFHLAEVGLI, EALPFTALLTVFFTVVAVIIE, LALFYLFNGLLSSVSDNVFVG, VATPNGQAAFLFLLTSALAPL, and VWMALPYTVVLTLVGLLCVQF.

This sequence belongs to the NhaB Na(+)/H(+) (TC 2.A.34) antiporter family.

It is found in the cell inner membrane. It catalyses the reaction 2 Na(+)(in) + 3 H(+)(out) = 2 Na(+)(out) + 3 H(+)(in). Its function is as follows. Na(+)/H(+) antiporter that extrudes sodium in exchange for external protons. This Serratia proteamaculans (strain 568) protein is Na(+)/H(+) antiporter NhaB.